A 304-amino-acid polypeptide reads, in one-letter code: Undecaprenyl-diphosphatase (304 aa).

A run of 8 helical transmembrane segments spans residues 5–25, 47–67, 72–92, 111–131, 137–157, 209–231, 248–268, and 282–302; these read FLFILKALIIAIVEGLTEFVP, GFPEMYEVVIQLGAILAVVVL, ISSSVVEFLSYIFSFIGLKAS, FGINVIIGTIPAAILGLLFHD, LFSTKTVAIGFIVGGILLIVI, ISGLSTTVATEFTFFLAIPAMVG, TNLISLILGFIVAFIVSLVVI, and IFAIYRVFAGIVLAILIFTKV.

The protein belongs to the UppP family.

It localises to the cell membrane. It catalyses the reaction di-trans,octa-cis-undecaprenyl diphosphate + H2O = di-trans,octa-cis-undecaprenyl phosphate + phosphate + H(+). Functionally, catalyzes the dephosphorylation of undecaprenyl diphosphate (UPP). Confers resistance to bacitracin. This Clostridium perfringens (strain SM101 / Type A) protein is Undecaprenyl-diphosphatase.